The chain runs to 262 residues: Ribosomal RNA small subunit methyltransferase A (262 aa).

S-adenosyl-L-methionine contacts are provided by asparagine 14, leucine 16, glycine 41, glutamate 62, aspartate 87, and asparagine 109.

The protein belongs to the class I-like SAM-binding methyltransferase superfamily. rRNA adenine N(6)-methyltransferase family. RsmA subfamily.

It localises to the cytoplasm. The enzyme catalyses adenosine(1518)/adenosine(1519) in 16S rRNA + 4 S-adenosyl-L-methionine = N(6)-dimethyladenosine(1518)/N(6)-dimethyladenosine(1519) in 16S rRNA + 4 S-adenosyl-L-homocysteine + 4 H(+). Specifically dimethylates two adjacent adenosines (A1518 and A1519) in the loop of a conserved hairpin near the 3'-end of 16S rRNA in the 30S particle. May play a critical role in biogenesis of 30S subunits. The sequence is that of Ribosomal RNA small subunit methyltransferase A from Francisella tularensis subsp. holarctica (strain FTNF002-00 / FTA).